The primary structure comprises 197 residues: Imidazoleglycerol-phosphate dehydratase (197 aa).

Belongs to the imidazoleglycerol-phosphate dehydratase family.

The protein resides in the cytoplasm. It catalyses the reaction D-erythro-1-(imidazol-4-yl)glycerol 3-phosphate = 3-(imidazol-4-yl)-2-oxopropyl phosphate + H2O. It functions in the pathway amino-acid biosynthesis; L-histidine biosynthesis; L-histidine from 5-phospho-alpha-D-ribose 1-diphosphate: step 6/9. The chain is Imidazoleglycerol-phosphate dehydratase from Nitrosococcus oceani (strain ATCC 19707 / BCRC 17464 / JCM 30415 / NCIMB 11848 / C-107).